The primary structure comprises 198 residues: Recombination protein RecR (198 aa).

The C4-type zinc finger occupies 58–73; the sequence is CSVCGNYTDTDPCAIC. The 95-residue stretch at 81-175 folds into the Toprim domain; sequence SLVCVVEEPK…KVTRIAHGIP (95 aa).

Belongs to the RecR family.

In terms of biological role, may play a role in DNA repair. It seems to be involved in an RecBC-independent recombinational process of DNA repair. It may act with RecF and RecO. The protein is Recombination protein RecR of Clostridium acetobutylicum (strain ATCC 824 / DSM 792 / JCM 1419 / IAM 19013 / LMG 5710 / NBRC 13948 / NRRL B-527 / VKM B-1787 / 2291 / W).